Reading from the N-terminus, the 254-residue chain is Alcohol dehydrogenase (254 aa).

10–33 (FVAGLGGIGLDTSRELVKRDLKNL) provides a ligand contact to NAD(+). Residue Ser-138 participates in substrate binding. Residue Tyr-151 is the Proton acceptor of the active site.

The protein belongs to the short-chain dehydrogenases/reductases (SDR) family. Homodimer.

The enzyme catalyses a primary alcohol + NAD(+) = an aldehyde + NADH + H(+). It carries out the reaction a secondary alcohol + NAD(+) = a ketone + NADH + H(+). The polypeptide is Alcohol dehydrogenase (Adh) (Drosophila madeirensis (Fruit fly)).